Consider the following 126-residue polypeptide: Glycine cleavage system H protein (126 aa).

The Lipoyl-binding domain occupies 21 to 103 (TVTVGISNHA…YEGGWIARIK (83 aa)). Lys62 carries the post-translational modification N6-lipoyllysine.

The protein belongs to the GcvH family. As to quaternary structure, the glycine cleavage system is composed of four proteins: P, T, L and H. (R)-lipoate is required as a cofactor.

Functionally, the glycine cleavage system catalyzes the degradation of glycine. The H protein shuttles the methylamine group of glycine from the P protein to the T protein. This chain is Glycine cleavage system H protein, found in Aliivibrio salmonicida (strain LFI1238) (Vibrio salmonicida (strain LFI1238)).